The sequence spans 122 residues: MTMNAQAIINSIEAEFLKEDLPTIHVGDTIKVGVKIVEGGKERIQPYEGTVIAKRNGGISETITVRKIFQGVGVERVFLLHSPRVASIKVLRRGKVRRAKLYYLRDRVGKATRIKQRFDRAL.

It belongs to the bacterial ribosomal protein bL19 family.

Its function is as follows. This protein is located at the 30S-50S ribosomal subunit interface and may play a role in the structure and function of the aminoacyl-tRNA binding site. The polypeptide is Large ribosomal subunit protein bL19 (rplS) (Synechocystis sp. (strain ATCC 27184 / PCC 6803 / Kazusa)).